The primary structure comprises 179 residues: GTP-dependent dephospho-CoA kinase (179 aa).

GTP contacts are provided by D55, V57, D74, K76, and E128.

This sequence belongs to the GTP-dependent DPCK family.

The enzyme catalyses 3'-dephospho-CoA + GTP = GDP + CoA + H(+). The protein operates within cofactor biosynthesis; coenzyme A biosynthesis. Its function is as follows. Catalyzes the GTP-dependent phosphorylation of the 3'-hydroxyl group of dephosphocoenzyme A to form coenzyme A (CoA). The polypeptide is GTP-dependent dephospho-CoA kinase (Saccharolobus solfataricus (strain ATCC 35092 / DSM 1617 / JCM 11322 / P2) (Sulfolobus solfataricus)).